Consider the following 264-residue polypeptide: Tryptophan synthase alpha chain (264 aa).

Catalysis depends on proton acceptor residues Glu45 and Asp56.

Belongs to the TrpA family. As to quaternary structure, tetramer of two alpha and two beta chains.

The catalysed reaction is (1S,2R)-1-C-(indol-3-yl)glycerol 3-phosphate + L-serine = D-glyceraldehyde 3-phosphate + L-tryptophan + H2O. It participates in amino-acid biosynthesis; L-tryptophan biosynthesis; L-tryptophan from chorismate: step 5/5. Functionally, the alpha subunit is responsible for the aldol cleavage of indoleglycerol phosphate to indole and glyceraldehyde 3-phosphate. In Leptospira interrogans serogroup Icterohaemorrhagiae serovar copenhageni (strain Fiocruz L1-130), this protein is Tryptophan synthase alpha chain.